Reading from the N-terminus, the 613-residue chain is Kelch-like protein 21 (613 aa).

The BTB domain occupies 38–105 (FDVTLCAEGK…CYTGRVTVTH (68 aa)). Residues 140–242 (CLEIQDFAEA…RRFYLLAHVE (103 aa)) form the BACK domain. Kelch repeat units follow at residues 289-337 (ILVV…ALGN), 338-384 (DIYV…VLKG), 386-424 (LYVV…ACRG), 426-472 (LYAI…TLNG), 474-514 (IYFV…ALGG), and 515-562 (RLYV…SIFR).

In terms of assembly, component of the BCR(KLHL21) E3 ubiquitin ligase complex, at least composed of cul3, klhl21 and rbx1.

Its subcellular location is the cytoplasm. The protein localises to the cytoskeleton. It localises to the spindle. It participates in protein modification; protein ubiquitination. Substrate-specific adapter of BCR (BTB-CUL3-RBX1) E3 ubiquitin-protein ligase complex required for efficient chromosome alignment and cytokinesis. The BCR(KLHL21) E3 ubiquitin ligase complex regulates localization of the chromosomal passenger complex (CPC) from chromosomes to the spindle midzone in anaphase and mediates the ubiquitination of AURKB. This is Kelch-like protein 21 (klhl21) from Danio rerio (Zebrafish).